A 64-amino-acid polypeptide reads, in one-letter code: Large ribosomal subunit protein bL35 (64 aa).

A disordered region spans residues 1–55 (MPKMKTNKSVSARFKLTASGQLKRTRPGKRHKLSKKSSQEKRNLSKQPLVDKGQV). A compositionally biased stretch (basic residues) spans 23–35 (KRTRPGKRHKLSK).

The protein belongs to the bacterial ribosomal protein bL35 family.

The polypeptide is Large ribosomal subunit protein bL35 (Chlamydia pneumoniae (Chlamydophila pneumoniae)).